The chain runs to 883 residues: Probable valine--tRNA ligase, cytoplasmic (883 aa).

Residues 1-23 (MTLKMDRKALKEEKKKQKLEKFL) show a composition bias toward basic and acidic residues. The segment at 1–49 (MTLKMDRKALKEEKKKQKLEKFLNKKTTQSKISKAPKPAKNKSSSGYDP) is disordered. Low complexity predominate over residues 30–45 (SKISKAPKPAKNKSSS). A 'HIGH' region motif is present at residues 82–92 (PNITGSLHIGH). The 'KMSKS' region motif lies at 586-590 (KMSKS). K589 contacts ATP.

Belongs to the class-I aminoacyl-tRNA synthetase family.

The protein localises to the cytoplasm. The enzyme catalyses tRNA(Val) + L-valine + ATP = L-valyl-tRNA(Val) + AMP + diphosphate. The polypeptide is Probable valine--tRNA ligase, cytoplasmic (Vairimorpha ceranae (strain BRL01) (Microsporidian parasite)).